The sequence spans 600 residues: NADPH-dependent diflavin oxidoreductase 1 (600 aa).

In terms of domain architecture, Flavodoxin-like spans 6–150 (LLILYGSQTG…VVDPWLKDLW (145 aa)). Residues 12-17 (SQTGTA), 59-62 (ATTG), 97-106 (LGDSSYPKFN), and Asp-132 each bind FMN. Residues 210 to 449 (IHPFLAPVLS…WVKKGSMKFP (240 aa)) form the FAD-binding FR-type domain. FAD-binding positions include Arg-354, 386 to 389 (RAFS), and 420 to 423 (GLCS). Residues Thr-463, 518-519 (SR), and 524-528 (KIYVQ) each bind NADP(+). Trp-599 is a binding site for FAD.

Belongs to the NADPH-dependent diflavin oxidoreductase NDOR1 family. It in the N-terminal section; belongs to the flavodoxin family. This sequence in the C-terminal section; belongs to the flavoprotein pyridine nucleotide cytochrome reductase family. In terms of assembly, interacts with ciapin1; as part of the cytosolic iron-sulfur (Fe-S) protein assembly (CIA) machinery. FAD serves as cofactor. The cofactor is FMN.

It localises to the cytoplasm. Its subcellular location is the perinuclear region. The enzyme catalyses 2 oxidized [2Fe-2S]-[protein] + NADPH = 2 reduced [2Fe-2S]-[protein] + NADP(+) + H(+). In terms of biological role, NADPH-dependent reductase which is a central component of the cytosolic iron-sulfur (Fe-S) protein assembly (CIA) machinery. Transfers electrons from NADPH via its FAD and FMN prosthetic groups to the [2Fe-2S] cluster of ciapin1, another key component of the CIA machinery. In turn, this reduced cluster provides electrons for assembly of cytosolic iron-sulfur cluster proteins. It can also reduce the [2Fe-2S] cluster of cisd1 and activate this protein implicated in Fe/S cluster repair. The chain is NADPH-dependent diflavin oxidoreductase 1 from Xenopus laevis (African clawed frog).